Consider the following 119-residue polypeptide: MSNTVRSLVIKTNVVKRIIKDVELAHIDINEAEKRVQSKIDNGEDSAEIEHQKFVLKKHLEALPDALVRLRNATNDLESISSDSAYEGTPELEQANEYLEKAKEVIEKEQTNFPTNGYH.

It belongs to the TBCA family. As to quaternary structure, supercomplex made of cofactors A to E. Cofactors A and D function by capturing and stabilizing tubulin in a quasi-native conformation. Cofactor E binds to the cofactor D-tubulin complex; interaction with cofactor C then causes the release of tubulin polypeptides that are committed to the native state.

The protein resides in the cytoplasm. Its subcellular location is the cytoskeleton. Functionally, required for the maintenance of microtubule structures and cell polarity. Beta-tubulin-folding protein; may have a regulatory role in the tubulin-folding pathway. In Schizosaccharomyces pombe (strain 972 / ATCC 24843) (Fission yeast), this protein is Tubulin-specific chaperone A (alp31).